Here is a 195-residue protein sequence, read N- to C-terminus: uncharacterized protein (195 aa).

This is an uncharacterized protein from Archaeoglobus fulgidus (strain ATCC 49558 / DSM 4304 / JCM 9628 / NBRC 100126 / VC-16).